Consider the following 520-residue polypeptide: 2-methylcitrate dehydratase, mitochondrial (520 aa).

A mitochondrion-targeting transit peptide spans 1 to 37 (MRAFRSAANFGAASNIYRKSFTPASIASNRFVSARMS).

The protein belongs to the PrpD family. As to quaternary structure, monomer.

Its subcellular location is the mitochondrion. It catalyses the reaction (2S,3S)-2-methylcitrate = 2-methyl-cis-aconitate + H2O. It participates in organic acid metabolism; propanoate degradation. Several bivalent metal ions, such as nickel, copper, zinc, mercury, and lead, inhibit the activity to some extent. Inhibited by structural analogs such as citrate, cis-aconitate, isocitrate, 2-methylisocitrate, tricarballylate and fluorocitrate, but not by trans-aconitate or adipate. Functionally, component of the methylcitrate cycle that catalyzes the dehydration of 2-methylcitrate to 2-methyl-cis-aconitate. The methylcitrate cycle is a metabolic pathway for the consumption of propionic acid. In Yarrowia lipolytica (strain CLIB 122 / E 150) (Yeast), this protein is 2-methylcitrate dehydratase, mitochondrial.